Here is a 431-residue protein sequence, read N- to C-terminus: Divalent metal cation transporter MntH (431 aa).

12 helical membrane-spanning segments follow: residues 30–50 (WSWT…IDPG), 63–83 (GYTL…IQTL), 106–126 (PLVW…DLAE), 137–159 (LFGL…ALHL), 169–189 (ILIG…LVLS), 209–229 (YALY…VIYL), 257–277 (VILG…MAAA), 287–307 (VATI…VTAS), 309–329 (VFGL…TLSG), 341–361 (IPLW…IMLG), 367–387 (ALVA…VPLL), and 405–425 (VTGV…YVLF).

The protein belongs to the NRAMP family.

It localises to the cell inner membrane. Functionally, h(+)-stimulated, divalent metal cation uptake system. In Chromohalobacter salexigens (strain ATCC BAA-138 / DSM 3043 / CIP 106854 / NCIMB 13768 / 1H11), this protein is Divalent metal cation transporter MntH.